The chain runs to 149 residues: uncharacterized protein (149 aa).

This is an uncharacterized protein from Escherichia coli (strain K12).